Consider the following 120-residue polypeptide: Chaperonin GroEL (120 aa).

Aspartate 23–threonine 27 is an ATP binding site.

The protein belongs to the chaperonin (HSP60) family. As to quaternary structure, forms a cylinder of 14 subunits composed of two heptameric rings stacked back-to-back. Interacts with the co-chaperonin GroES.

The protein resides in the cytoplasm. It catalyses the reaction ATP + H2O + a folded polypeptide = ADP + phosphate + an unfolded polypeptide.. Functionally, together with its co-chaperonin GroES, plays an essential role in assisting protein folding. The GroEL-GroES system forms a nano-cage that allows encapsulation of the non-native substrate proteins and provides a physical environment optimized to promote and accelerate protein folding. This Mycolicibacterium fallax (Mycobacterium fallax) protein is Chaperonin GroEL.